Reading from the N-terminus, the 116-residue chain is UPF0122 protein CA_C1753 (116 aa).

The protein belongs to the UPF0122 family.

Functionally, might take part in the signal recognition particle (SRP) pathway. This is inferred from the conservation of its genetic proximity to ftsY/ffh. May be a regulatory protein. This is UPF0122 protein CA_C1753 from Clostridium acetobutylicum (strain ATCC 824 / DSM 792 / JCM 1419 / IAM 19013 / LMG 5710 / NBRC 13948 / NRRL B-527 / VKM B-1787 / 2291 / W).